Reading from the N-terminus, the 1170-residue chain is DNA excision repair protein ERCC-5 (1170 aa).

The tract at residues 1–78 is N-domain; the sequence is MGVQGLWKLL…RIRPIFVFDG (78 aa). Lys8 is subject to N6-acetyllysine. Asp30 serves as a coordination point for Mg(2+). Positions 31 to 67 are DNA-binding; may bind to the undamaged single-strand DNA of the DNA repair bubble; that stretch reads ISIWLNQALKGVRDSHGNVIENAHLLTLFHRLCKLLF. Residue Asp77 participates in Mg(2+) binding. Positions 79 to 784 are spacer region; it reads DAPLLKKQTL…LRLFGVPYIQ (706 aa). Disordered stretches follow at residues 304-479, 520-587, and 600-701; these read DSES…RCDT, HVSG…PKAC, and LENA…ECLL. Residues 306 to 323 are compositionally biased toward low complexity; sequence ESLPSSSNVHSVSSNLKS. Composition is skewed to basic and acidic residues over residues 324–336 and 363–373; these read SPHEKVKPEREPE and SREGRQSKERN. Residue Ser384 is modified to Phosphoserine. Positions 455-474 are enriched in polar residues; it reads TSGSSANGQTDSAHSFTTAS. Residues 539 to 551 are compositionally biased toward basic and acidic residues; that stretch reads THSDQGIDIHPED. Residues 659 to 676 show a composition bias toward polar residues; that stretch reads SVVSNSELQTESSEASTH. Over residues 677-698 the composition is skewed to basic and acidic residues; the sequence is LSEKDAEEPRETLEEGTSRDTE. Phosphoserine occurs at positions 704 and 705. The segment at 785–880 is I-domain; the sequence is APMEAEAQCA…VTAMEILNEF (96 aa). Mg(2+) contacts are provided by Glu788, Glu790, Asp809, and Asp811. A DNA-binding; may bind to the undamaged single-strand DNA of the DNA repair bubble region spans residues 819 to 835; sequence HVYKNFFNKNKFVEYYQ. The DNA-binding; H2TH (helix-2turn-helix) motif which binds double-stranded DNA stretch occupies residues 847-879; it reads RNKLINLAYLLGSDYTEGIPTVGCVTAMEILNE. Asp860 is a Mg(2+) binding site. The DNA-binding; may bind double-stranded DNA stretch occupies residues 911-917; the sequence is TKVKKKL. Residues 980–1008 form an interaction with PCNA region; that stretch reads LKHLNAHQTQLRIDSFFRLAQQEKQDAKL. The tract at residues 1010-1170 is interaction with ERCC6/CSB; it reads KSHRLNRAVT…KSMKRRKKKT (161 aa). Residues 1033–1146 form a disordered region; the sequence is LTKVTEALDD…DDEDKAKTVL (114 aa). Basic and acidic residues predominate over residues 1041–1060; it reads DDAKGKTQKRELPYKKETSV. Residues 1049–1065 carry the Nuclear localization signal 1 motif; the sequence is KRELPYKKETSVPKRRR. Polar residues predominate over residues 1094 to 1110; sequence SVMSARQRSAAESSKIS. Residues 1153-1170 carry the Nuclear localization signal 2 motif; that stretch reads FGKKKLKLKSMKRRKKKT.

The protein belongs to the XPG/RAD2 endonuclease family. XPG subfamily. In terms of assembly, monomer. Homodimer. Component of the homologous recombination repair (HR) complex composed of ERCC5/XPG, BRCA2, PALB2, DSS1 and RAD51. Within the complex, interacts with BRCA2 and PALB2. Interacts with RNA polymerase II. Interacts (via C-terminus) with ERCC6/CSB; the interaction stimulates ERCC6/CSB binding to the DNA repair bubble and ERCC6/CSB ATPase activity. May form a complex composed of RNA polymerase II, ERCC6/CSB and ERCC5/XPG which associates with the DNA repair bubble during transcription-coupled nucleotide excision repair. Interacts with BRCA1; the interaction promotes the release of BRCA1 from DNA. Interacts with PCNA. Interacts with NTHL1; the interaction stimulates NTHL1 activity and NTHL1 binding to its DNA substrate. It depends on Mg(2+) as a cofactor.

Its subcellular location is the nucleus. It localises to the chromosome. In terms of biological role, single-stranded structure-specific DNA endonuclease involved in DNA excision repair. Makes the 3'incision in DNA nucleotide excision repair (NER). Binds and bends DNA repair bubble substrate and breaks base stacking at the single-strand/double-strand DNA junction of the DNA bubble. Plays a role in base excision repair (BER) by promoting the binding of DNA glycosylase NTHL1 to its substrate and increasing NTHL1 catalytic activity that removes oxidized pyrimidines from DNA. Involved in transcription-coupled nucleotide excision repair (TCR) which allows RNA polymerase II-blocking lesions to be rapidly removed from the transcribed strand of active genes. Functions during the initial step of TCR in cooperation with ERCC6/CSB to recognized stalled RNA polymerase II. Also, stimulates ERCC6/CSB binding to the DNA repair bubble and ERCC6/CSB ATPase activity. Required for DNA replication fork maintenance and preservation of genomic stability. Involved in homologous recombination repair (HRR) induced by DNA replication stress by recruiting RAD51, BRCA2, and PALB2 to the damaged DNA site. During HRR, binds to the replication fork with high specificity and stabilizes it. Also, acts upstream of HRR, to promote the release of BRCA1 from DNA. The polypeptide is DNA excision repair protein ERCC-5 (Ercc5) (Mus musculus (Mouse)).